The primary structure comprises 176 residues: Ribosome maturation factor RimM (176 aa).

One can recognise a PRC barrel domain in the interval 97-176 (EDEFYWRDLI…QITVDWDPDF (80 aa)).

This sequence belongs to the RimM family. Binds ribosomal protein uS19.

It localises to the cytoplasm. An accessory protein needed during the final step in the assembly of 30S ribosomal subunit, possibly for assembly of the head region. Essential for efficient processing of 16S rRNA. May be needed both before and after RbfA during the maturation of 16S rRNA. It has affinity for free ribosomal 30S subunits but not for 70S ribosomes. The chain is Ribosome maturation factor RimM from Shewanella sediminis (strain HAW-EB3).